The primary structure comprises 999 residues: Probable basic-leucine zipper transcription factor N (999 aa).

2 stretches are compositionally biased toward low complexity: residues 1–79 (MYQS…YQQQ) and 88–126 (NNVN…INNN). Residues 1–126 (MYQSIPQQGN…NNNNGNINNN (126 aa)) are disordered. Coiled coils occupy residues 148 to 198 (QQQQ…MVLM) and 232 to 282 (GIQQ…QQIS). Positions 286–302 (ESASPYYSTPIQSNTML) are enriched in polar residues. 3 disordered regions span residues 286 to 406 (ESAS…SQDQ), 450 to 533 (QQLH…PTIN), and 601 to 620 (EKQK…NYRQ). The span at 303–347 (SIPSSPGIPSSIPQLNNSNNINNNSNNNNNNNNNNNNNNINYNSN) shows a compositional bias: low complexity. Residues 348–406 (MASNFISQHSNNGSNTSSPVPQTTYLQNSGGNFNAYNGSNTNSPITPSSYLQPTTSQDQ) show a composition bias toward polar residues. Residues 423–451 (IQQQQKILQQQQQQQLLLQQQIQQQQQQQ) are a coiled coil. Over residues 450 to 517 (QQLHQPQSPQ…IIQPTTIQPQ (68 aa)) the composition is skewed to low complexity. One can recognise a bZIP domain in the interval 601-664 (EKQKTRRRAS…KKLLHENNIL (64 aa)). The tract at residues 602-632 (KQKTRRRASQNLASRNYRQRKKQYVNEVEDR) is basic motif. The leucine-zipper stretch occupies residues 636–643 (IVQENERL). Disordered regions lie at residues 665–711 (KSGG…VVET), 779–807 (QSCP…SPYE), and 870–899 (VNNG…TTTT). Positions 682–692 (SEDEDEDDFDQ) are enriched in acidic residues. Residues 921 to 950 (HLVQLSGLLDKLKENIDHENETLIQTYEKL) adopt a coiled-coil conformation.

It belongs to the bZIP family.

The protein localises to the nucleus. In terms of biological role, probable transcriptional regulator. In Dictyostelium discoideum (Social amoeba), this protein is Probable basic-leucine zipper transcription factor N (bzpN).